Here is a 290-residue protein sequence, read N- to C-terminus: Undecaprenyl-diphosphatase (290 aa).

Transmembrane regions (helical) follow at residues 39-59, 85-105, 118-138, 202-222, 230-250, and 261-281; these read PGAA…LIYF, AQMG…GITL, LIAT…RLAA, SFLL…KDVG, PTIF…AWFM, and FVIY…AGVL.

The protein belongs to the UppP family.

The protein localises to the cell membrane. The enzyme catalyses di-trans,octa-cis-undecaprenyl diphosphate + H2O = di-trans,octa-cis-undecaprenyl phosphate + phosphate + H(+). Catalyzes the dephosphorylation of undecaprenyl diphosphate (UPP). Confers resistance to bacitracin. The sequence is that of Undecaprenyl-diphosphatase from Streptomyces griseus subsp. griseus (strain JCM 4626 / CBS 651.72 / NBRC 13350 / KCC S-0626 / ISP 5235).